The chain runs to 183 residues: uncharacterized protein (183 aa).

A disordered region spans residues 54-89 (DAASQSDPLPGGDGLTGGDSKATRRTSPRYYPPSEA).

This is an uncharacterized protein from Human cytomegalovirus (strain AD169) (HHV-5).